Here is a 469-residue protein sequence, read N- to C-terminus: GTPase Der (469 aa).

EngA-type G domains are found at residues 3–166 (PVIA…PEDE) and 177–350 (LRLA…ESAN). GTP contacts are provided by residues 9–16 (GRPNVGKS), 56–60 (DTGGI), 118–121 (NKVD), 183–190 (GRPNVGKS), 230–234 (DTAGV), and 295–298 (NKWD). The KH-like domain maps to 351–435 (LKVSPAKLTQ…PVKIEFKTSE (85 aa)).

It belongs to the TRAFAC class TrmE-Era-EngA-EngB-Septin-like GTPase superfamily. EngA (Der) GTPase family. As to quaternary structure, associates with the 50S ribosomal subunit.

GTPase that plays an essential role in the late steps of ribosome biogenesis. The chain is GTPase Der from Acinetobacter baumannii (strain AB0057).